The primary structure comprises 212 residues: Large ribosomal subunit protein uL3 (212 aa).

Residues 136 to 155 (THGNSVSHRVLGSTGQNQTP) are disordered. Gln153 is modified (N5-methylglutamine).

This sequence belongs to the universal ribosomal protein uL3 family. Part of the 50S ribosomal subunit. Forms a cluster with proteins L14 and L19. Methylated by PrmB.

Its function is as follows. One of the primary rRNA binding proteins, it binds directly near the 3'-end of the 23S rRNA, where it nucleates assembly of the 50S subunit. The chain is Large ribosomal subunit protein uL3 from Acinetobacter baumannii (strain AB307-0294).